The primary structure comprises 821 residues: Zinc finger protein 41 (821 aa).

A disordered region spans residues 1–55 (MAANGDSPPWSPALAAEGRGSSCEVRRERTPEARIHSVKRYPDLSPGPKGRSSAD). Basic and acidic residues predominate over residues 24–35 (EVRRERTPEARI). The region spanning 69 to 140 (VSFEDVTVDF…EGEAPHQSCS (72 aa)) is the KRAB domain. Lys120 is covalently cross-linked (Glycyl lysine isopeptide (Lys-Gly) (interchain with G-Cter in SUMO2)). The C2H2-type 1 zinc-finger motif lies at 313-335 (YVCTECVMGFTQKSHLFEHQRIH). The C2H2-type 2; degenerate zinc finger occupies 341–364 (RECDKSNKVFPQKPQVDVHPSVYT). C2H2-type zinc fingers lie at residues 369–391 (YLCT…QKIH), 397–419 (YKCS…LRIH), 425–447 (YECS…QKTH), 453–475 (YECN…QRIH), 481–503 (YVCA…QRIH), 509–531 (YECS…QRIH), 537–559 (YICT…QKTH), 565–587 (YMCA…QKTH), 593–615 (YKCN…QKSH), and 621–643 (YECK…QRIH). Residue Lys647 forms a Glycyl lysine isopeptide (Lys-Gly) (interchain with G-Cter in SUMO2) linkage. 6 C2H2-type zinc fingers span residues 649-671 (YVCP…HRIH), 677-699 (YECS…QKIH), 705-727 (NICA…QKIH), 733-755 (YECG…QKSH), 761-783 (YECS…QIIH), and 789-811 (YACT…QKMH).

This sequence belongs to the krueppel C2H2-type zinc-finger protein family. In terms of tissue distribution, expressed in the heart, brain, placenta, lung, liver, skeletal muscle, kidney and pancreas.

The protein resides in the nucleus. In terms of biological role, may be involved in transcriptional regulation. The chain is Zinc finger protein 41 (ZNF41) from Homo sapiens (Human).